A 440-amino-acid chain; its full sequence is uncharacterized protein (440 aa).

Residues 1 to 19 (MKKLLLAASIVYFASACLA) form the signal peptide.

This is an uncharacterized protein from Rickettsia prowazekii (strain Madrid E).